The chain runs to 351 residues: Minor outer capsid protein P9 (351 aa).

Residues G246 to A308 are disordered. The span at M285–P297 shows a compositional bias: basic and acidic residues.

This sequence belongs to the phytoreovirus minor outer capsid protein P9 family.

The protein localises to the virion. It is found in the host cytoplasm. Functionally, minor outer capsid protein. The sequence is that of Minor outer capsid protein P9 from Rice dwarf virus (isolate O) (RDV).